The chain runs to 198 residues: ATP-dependent Clp protease proteolytic subunit (198 aa).

The Nucleophile role is filled by Ser98. Residue His123 is part of the active site.

The protein belongs to the peptidase S14 family. Fourteen ClpP subunits assemble into 2 heptameric rings which stack back to back to give a disk-like structure with a central cavity, resembling the structure of eukaryotic proteasomes.

It is found in the cytoplasm. The catalysed reaction is Hydrolysis of proteins to small peptides in the presence of ATP and magnesium. alpha-casein is the usual test substrate. In the absence of ATP, only oligopeptides shorter than five residues are hydrolyzed (such as succinyl-Leu-Tyr-|-NHMec, and Leu-Tyr-Leu-|-Tyr-Trp, in which cleavage of the -Tyr-|-Leu- and -Tyr-|-Trp bonds also occurs).. Functionally, cleaves peptides in various proteins in a process that requires ATP hydrolysis. Has a chymotrypsin-like activity. Plays a major role in the degradation of misfolded proteins. The protein is ATP-dependent Clp protease proteolytic subunit of Levilactobacillus brevis (strain ATCC 367 / BCRC 12310 / CIP 105137 / JCM 1170 / LMG 11437 / NCIMB 947 / NCTC 947) (Lactobacillus brevis).